The chain runs to 1472 residues: Vacuolar cation-transporting ATPase YPK9 (1472 aa).

Met1 carries the N-acetylmethionine modification. Polar residues-rich tracts occupy residues 1–12 and 72–87; these read MDIPSSNQIQHG and SFQS…SGNL. 3 disordered regions span residues 1 to 32, 71 to 115, and 179 to 273; these read MDIP…TATT, HSFQ…SRNP, and AKSY…DDVH. Over 1–293 the chain is Cytoplasmic; the sequence is MDIPSSNQIQ…YHEKFYPQYA (293 aa). Position 95 is a phosphothreonine (Thr95). Composition is skewed to low complexity over residues 103–115 and 211–222; these read SSAE…SRNP and SATHSSSSLSRY. Ser108 is subject to Phosphoserine. The segment covering 234–243 has biased composition (acidic residues); the sequence is SQTDEILEDE. A helical transmembrane segment spans residues 294 to 315; it reads PNLHYQRFYIAEEDLVIGIAAY. Residues 316 to 321 lie on the Vacuolar side of the membrane; sequence QTSKFW. The helical transmembrane segment at 322-344 threads the bilayer; sequence YIIYNLCCFLTFGLVYLLTRWLP. Over 345–488 the chain is Cytoplasmic; the sequence is HLKVKLYGVK…INLRMKTTSE (144 aa). The helical transmembrane segment at 489 to 511 threads the bilayer; it reads ILFNEVLHPFYVFQVFSIILWGI. Over 512–514 the chain is Vacuolar; the sequence is DEY. Residues 515 to 533 traverse the membrane as a helical segment; sequence YYYAACIFLISVLSIFDSL. The Cytoplasmic portion of the chain corresponds to 534–693; that stretch reads NEQKKVSRNL…PTGFKFYRDS (160 aa). A helical membrane pass occupies residues 694-713; that stretch reads FKYIGFMSLIAIFGFCVSCV. Topologically, residues 714–726 are vacuolar; it reads QFIKLGLDKKTMI. A helical membrane pass occupies residues 727 to 748; it reads LRALDIITIVVPPALPATLTIG. At 749-1244 the chain is on the cytoplasmic side; the sequence is TNFALSRLKE…ALVTSFACFQ (496 aa). Residue Asp781 is the 4-aspartylphosphate intermediate of the active site. 2 positions are modified to phosphoserine: Ser1117 and Ser1120. Mg(2+)-binding residues include Asp1187 and Asp1191. Residues 1245-1264 form a helical membrane-spanning segment; that stretch reads YMSLYSAIQFITITILYSRG. At 1265–1271 the chain is on the vacuolar side; sequence SNLGDFQ. A helical transmembrane segment spans residues 1272-1289; that stretch reads FLYIDLLLIVPIAICMSW. Residues 1290-1307 lie on the Cytoplasmic side of the membrane; the sequence is SKSYEKIDKKRPSANLVS. Residues 1308-1331 form a helical membrane-spanning segment; it reads PKILVPLLISVFLVFLFQFIPWII. Topologically, residues 1332–1351 are vacuolar; that stretch reads VQKMSWYIKPIVGGDDAVQS. A helical transmembrane segment spans residues 1352–1374; it reads SDNTVLFFVSNFQYILTAIVLSV. At 1375–1387 the chain is on the cytoplasmic side; sequence GPPYREPMSKNFE. The chain crosses the membrane as a helical span at residues 1388 to 1407; sequence FIVDITVSIGASLLLMTLDT. Over 1408-1423 the chain is Vacuolar; it reads ESYLGKMLQLTPISNS. The helical transmembrane segment at 1424-1446 threads the bilayer; the sequence is FTMFIIVWVILNYYAQLYIPPSI. The Cytoplasmic portion of the chain corresponds to 1447 to 1472; sequence KGWLKKKKSSKKYKLLIQEEMKLKEV.

Belongs to the cation transport ATPase (P-type) (TC 3.A.3) family. Type V subfamily.

It localises to the vacuole membrane. It catalyses the reaction ATP + H2O = ADP + phosphate + H(+). In terms of biological role, vacuolar transporter which plays a role in sequestration of divalent heavy metal ions. The protein is Vacuolar cation-transporting ATPase YPK9 (YPK9) of Saccharomyces cerevisiae (strain ATCC 204508 / S288c) (Baker's yeast).